A 147-amino-acid chain; its full sequence is Ubiquitin-conjugating enzyme E2 D1 (147 aa).

One can recognise a UBC core domain in the interval 1-147 (MALKRIQKEL…AREWTQKYAM (147 aa)). Cys85 acts as the Glycyl thioester intermediate in catalysis.

This sequence belongs to the ubiquitin-conjugating enzyme family. Component of a E3 ubiquitin ligase complex containing UBE2D1, SIAH1, CACYBP/SIP, SKP1, APC and TBL1X. Interacts with RNF11. Autoubiquitinated.

The protein resides in the cytoplasm. The enzyme catalyses S-ubiquitinyl-[E1 ubiquitin-activating enzyme]-L-cysteine + [E2 ubiquitin-conjugating enzyme]-L-cysteine = [E1 ubiquitin-activating enzyme]-L-cysteine + S-ubiquitinyl-[E2 ubiquitin-conjugating enzyme]-L-cysteine.. It carries out the reaction S-ubiquitinyl-[E1 ubiquitin-activating enzyme]-L-cysteine + [acceptor protein]-L-lysine = [E1 ubiquitin-activating enzyme]-L-cysteine + N(6)-monoubiquitinyl-[acceptor protein]-L-lysine.. It participates in protein modification; protein ubiquitination. Functionally, accepts ubiquitin from the E1 complex and catalyzes its covalent attachment to other proteins. In vitro catalyzes 'Lys-48'-linked polyubiquitination. Mediates the selective degradation of short-lived and abnormal proteins. Functions in the E6/E6-AP-induced ubiquitination of p53/TP53. Mediates ubiquitination of PEX5 and auto-ubiquitination of STUB1, TRAF6 and TRIM63/MURF1. Ubiquitinates STUB1-associated HSP90AB1 in vitro. Lacks inherent specificity for any particular lysine residue of ubiquitin. Essential for viral activation of IRF3. Mediates polyubiquitination of CYP3A4. The chain is Ubiquitin-conjugating enzyme E2 D1 (UBE2D1) from Bos taurus (Bovine).